The sequence spans 205 residues: Large ribosomal subunit protein uL4 (205 aa).

The interval 53–77 (RAAVRGGGRKPWKQKGTGRARAGSI) is disordered. Residues 59–70 (GGRKPWKQKGTG) show a composition bias toward basic residues.

The protein belongs to the universal ribosomal protein uL4 family. In terms of assembly, part of the 50S ribosomal subunit.

Functionally, one of the primary rRNA binding proteins, this protein initially binds near the 5'-end of the 23S rRNA. It is important during the early stages of 50S assembly. It makes multiple contacts with different domains of the 23S rRNA in the assembled 50S subunit and ribosome. Forms part of the polypeptide exit tunnel. This chain is Large ribosomal subunit protein uL4, found in Acidithiobacillus ferrooxidans (strain ATCC 23270 / DSM 14882 / CIP 104768 / NCIMB 8455) (Ferrobacillus ferrooxidans (strain ATCC 23270)).